Consider the following 320-residue polypeptide: ATP-dependent 6-phosphofructokinase (320 aa).

Position 12 (G12) interacts with ATP. ADP-binding positions include 22–26 (RGVVR) and 55–60 (RYSVSD). ATP contacts are provided by residues 73 to 74 (RF) and 103 to 106 (GDGS). D104 lines the Mg(2+) pocket. 126–128 (TID) is a substrate binding site. D128 functions as the Proton acceptor in the catalytic mechanism. R155 is an ADP binding site. Substrate is bound by residues R163 and 170–172 (MGR). ADP is bound by residues 186–188 (GCE), K212, and 214–216 (KKH). Substrate-binding positions include E223, R244, and 250–253 (HIQR).

The protein belongs to the phosphofructokinase type A (PFKA) family. ATP-dependent PFK group I subfamily. Prokaryotic clade 'B1' sub-subfamily. In terms of assembly, homotetramer. It depends on Mg(2+) as a cofactor.

It is found in the cytoplasm. The catalysed reaction is beta-D-fructose 6-phosphate + ATP = beta-D-fructose 1,6-bisphosphate + ADP + H(+). It participates in carbohydrate degradation; glycolysis; D-glyceraldehyde 3-phosphate and glycerone phosphate from D-glucose: step 3/4. With respect to regulation, allosterically activated by ADP and other diphosphonucleosides, and allosterically inhibited by phosphoenolpyruvate. In terms of biological role, catalyzes the phosphorylation of D-fructose 6-phosphate to fructose 1,6-bisphosphate by ATP, the first committing step of glycolysis. The chain is ATP-dependent 6-phosphofructokinase from Pectobacterium carotovorum subsp. carotovorum (strain PC1).